A 190-amino-acid polypeptide reads, in one-letter code: Anthranilate synthase component II (190 aa).

The Glutamine amidotransferase type-1 domain occupies M1–A190. G51–G53 contributes to the L-glutamine binding site. C76 acts as the Nucleophile; for GATase activity in catalysis. L-glutamine contacts are provided by residues Q80 and S126–L127. Catalysis depends on residues H167 and E169.

As to quaternary structure, tetramer of two components I and two components II.

The catalysed reaction is chorismate + L-glutamine = anthranilate + pyruvate + L-glutamate + H(+). Its pathway is amino-acid biosynthesis; L-tryptophan biosynthesis; L-tryptophan from chorismate: step 1/5. The chain is Anthranilate synthase component II (trpG2) from Haloarcula marismortui (strain ATCC 43049 / DSM 3752 / JCM 8966 / VKM B-1809) (Halobacterium marismortui).